A 374-amino-acid chain; its full sequence is Type II methyltransferase M.NgoFVII (374 aa).

An SAM-dependent MTase C5-type domain is found at 16–344 (PKILSLFSGC…KSILPIFSDN (329 aa)). Cysteine 88 is an active-site residue.

The protein belongs to the class I-like SAM-binding methyltransferase superfamily. C5-methyltransferase family.

It carries out the reaction a 2'-deoxycytidine in DNA + S-adenosyl-L-methionine = a 5-methyl-2'-deoxycytidine in DNA + S-adenosyl-L-homocysteine + H(+). In terms of biological role, a methylase, recognizes the double-stranded sequence 5'-GCSGC-3', methylates C-5 on both strands, and protects the DNA from cleavage by the NgoFVII endonuclease. In Neisseria gonorrhoeae, this protein is Type II methyltransferase M.NgoFVII (ngoFVIIM).